The primary structure comprises 371 residues: Opsin, ultraviolet-sensitive (371 aa).

The Extracellular segment spans residues 1–52 (MSNDSIHWEARYLPAGPPRLLGWNVPAEELIHIPEHWLVYPEPNPSLHYLLA). A glycan (N-linked (GlcNAc...) asparagine) is linked at N3. The chain crosses the membrane as a helical span at residues 53 to 73 (LLYILFTFLALLGNGLVIWIF). The Cytoplasmic segment spans residues 74–84 (CAAKSLRTPSN). A helical membrane pass occupies residues 85-105 (MFVVNLAICDFFMMIKTPIFI). The Extracellular portion of the chain corresponds to 106 to 121 (YNSFNTGFALGNLGCQ). C120 and C197 are joined by a disulfide. A helical transmembrane segment spans residues 122 to 142 (IFAVIGSLTGIGAAITNAAIA). Topologically, residues 143-161 (YDRYSTIARPLDGKLSRGQ) are cytoplasmic. Residues 162 to 182 (VILFIVLIWTYTIPWALMPVM) traverse the membrane as a helical segment. The Extracellular portion of the chain corresponds to 183 to 209 (GVWGRFVPEGFLTSCSFDYLTDTNEIR). A helical transmembrane segment spans residues 210–230 (IFVATIFTFSYCIPMILIIYY). Residues 231 to 278 (YSQIVSHVVNHEKALREQAKKMNVDSLRSNANTSSQSAEIRIAKAAIT) lie on the Cytoplasmic side of the membrane. A helical transmembrane segment spans residues 279–299 (ICFLYVLSWTPYGVMSMIGAF). At 300–302 (GNK) the chain is on the extracellular side. Residues 303 to 323 (ALLTPGVTMIPACTCKAVACL) form a helical membrane-spanning segment. K318 is subject to N6-(retinylidene)lysine. Topologically, residues 324 to 371 (DPYVYAISHPKYRLELQKRLPWLELQEKPISDSTSTTTETVNTPPASS) are cytoplasmic.

The protein belongs to the G-protein coupled receptor 1 family. Opsin subfamily. Phosphorylated on some or all of the serine and threonine residues present in the C-terminal region. As to expression, expressed in the dorsal region of the retina.

Its subcellular location is the membrane. Visual pigments are the light-absorbing molecules that mediate vision. They consist of an apoprotein, opsin, covalently linked to 11-cis-retinal. The sequence is that of Opsin, ultraviolet-sensitive (UVOP) from Apis mellifera (Honeybee).